The sequence spans 248 residues: MRTAIIAGNWKMNKTVKEAVELVKELKPLVKDAKCDVVVCPTYVCLPAVLEEVKGSNIKVGAQNMHFEESGAYTGEIAPKMLEELGVHYVIIGHSERRQYFNETDETVNKKVKKAFEHNLIPIVCCGESLEEREGNITEKVLEGQIKVGLKELSKEQVEKLVIAYEPIWAIGTGKTATDEQANETIGYIRTVVKDMYGESVADKVRIQYGGSVKPGTIKAQMAKEEIDGALVGGASLKAKDFAAIVNY.

Substrate is bound at residue 9–11 (NWK). His-94 functions as the Electrophile in the catalytic mechanism. The Proton acceptor role is filled by Glu-166. Substrate contacts are provided by residues Gly-172, Ser-212, and 233-234 (GG).

The protein belongs to the triosephosphate isomerase family. As to quaternary structure, homodimer.

It is found in the cytoplasm. It catalyses the reaction D-glyceraldehyde 3-phosphate = dihydroxyacetone phosphate. Its pathway is carbohydrate biosynthesis; gluconeogenesis. The protein operates within carbohydrate degradation; glycolysis; D-glyceraldehyde 3-phosphate from glycerone phosphate: step 1/1. In terms of biological role, involved in the gluconeogenesis. Catalyzes stereospecifically the conversion of dihydroxyacetone phosphate (DHAP) to D-glyceraldehyde-3-phosphate (G3P). This chain is Triosephosphate isomerase, found in Clostridium botulinum (strain Okra / Type B1).